The chain runs to 1274 residues: Mediator of RNA polymerase II transcription subunit 14 (1274 aa).

3 disordered regions span residues Met-1–Ala-40, Leu-1056–Gln-1142, and Ala-1155–Asp-1274. The span at Ala-27 to Lys-37 shows a compositional bias: basic and acidic residues. Positions Gln-1075–Pro-1085 are enriched in polar residues. The segment covering Ala-1090–Gln-1104 has biased composition (low complexity). Over residues Pro-1108–Ser-1119 the composition is skewed to pro residues. 3 stretches are compositionally biased toward low complexity: residues Gln-1120–Gln-1142, Ala-1155–Thr-1172, and Pro-1183–Gln-1252. Gly residues predominate over residues Pro-1253–Gly-1265.

Belongs to the Mediator complex subunit 14 family. In terms of assembly, component of the Mediator complex.

It is found in the nucleus. In terms of biological role, component of the Mediator complex, a coactivator involved in the regulated transcription of nearly all RNA polymerase II-dependent genes. Mediator functions as a bridge to convey information from gene-specific regulatory proteins to the basal RNA polymerase II transcription machinery. Mediator is recruited to promoters by direct interactions with regulatory proteins and serves as a scaffold for the assembly of a functional preinitiation complex with RNA polymerase II and the general transcription factors. In Neurospora crassa (strain ATCC 24698 / 74-OR23-1A / CBS 708.71 / DSM 1257 / FGSC 987), this protein is Mediator of RNA polymerase II transcription subunit 14 (rgr1).